The following is a 594-amino-acid chain: Sucrose transport protein SUC3 (594 aa).

Serine 2 is modified (N-acetylserine). Residues 2–58 (SDSVSISVPYRNLRKEIELETVTKHRQNESGSSSFSESASPSNHSDSADGESVSKNC) lie on the Cytoplasmic side of the membrane. The disordered stretch occupies residues 23–50 (VTKHRQNESGSSSFSESASPSNHSDSAD). Over residues 31–46 (SGSSSFSESASPSNHS) the composition is skewed to low complexity. The chain crosses the membrane as a helical span at residues 59–79 (SLVTLVLSCTVAAGVQFGWAL). Residues 80 to 98 (QLSLLTPYIQTLGISHAFS) are Extracellular-facing. A helical membrane pass occupies residues 99–119 (SFIWLCGPITGLVVQPFVGIW). Over 120–131 (SDKCTSKYGRRR) the chain is Cytoplasmic. Residues 132 to 152 (PFILVGSFMISIAVIIIGFSA) form a helical membrane-spanning segment. At 153–174 (DIGYLLGDSKEHCSTFKGTRTR) the chain is on the extracellular side. A helical transmembrane segment spans residues 175–195 (AAVVFIIGFWLLDLANNTVQG). Residues 196–214 (PARALLADLSGPDQRNTAN) lie on the Cytoplasmic side of the membrane. Residues 215-235 (AVFCLWMAIGNILGFSAGASG) traverse the membrane as a helical segment. The Extracellular portion of the chain corresponds to 236 to 257 (KWQEWFPFLTSRACCAACGNLK). Residues 258 to 278 (AAFLLAVVFLTICTLVTIYFA) traverse the membrane as a helical segment. Over 279 to 365 (KEIPFTSNKP…LTSLRHLPPA (87 aa)) the chain is Cytoplasmic. The helical transmembrane segment at 366–386 (MHSVLIVMALTWLSWFPFFLF) threads the bilayer. The Extracellular portion of the chain corresponds to 387 to 417 (DTDWMGREVYHGDPTGDSLHMELYDQGVREG). The chain crosses the membrane as a helical span at residues 418 to 438 (ALGLLLNSVVLGISSFLIEPM). At 439–445 (CQRMGAR) the chain is on the cytoplasmic side. The chain crosses the membrane as a helical span at residues 446–466 (VVWALSNFTVFACMAGTAVIS). The Extracellular segment spans residues 467–489 (LMSLSDDKNGIEYIMRGNETTRT). Residue asparagine 484 is glycosylated (N-linked (GlcNAc...) asparagine). Residues 490 to 510 (AAVIVFALLGFPLAITYSVPF) traverse the membrane as a helical segment. Residues 511–525 (SVTAEVTADSGGGQG) lie on the Cytoplasmic side of the membrane. A helical membrane pass occupies residues 526–546 (LAIGVLNLAIVIPQMIVSLGA). Residues 547 to 555 (GPWDQLFGG) are Extracellular-facing. Residues 556–576 (GNLPAFVLASVAAFAAGVIAL) traverse the membrane as a helical segment. The Cytoplasmic portion of the chain corresponds to 577–594 (QRLPTLSSSFKSTGFHIG).

The protein belongs to the glycoside-pentoside-hexuronide (GPH) cation symporter transporter (TC 2.A.2.4) family. Homodimer. Interacts with SUC2 and SUC4. Mostly localized in parenchymatic cells next to vascular tissues (at protein level). Present in stipules, trichomes, hydathodes and guard cells of source leaves, as well as in lateral root tips and flowers.

The protein localises to the cell membrane. The enzyme catalyses sucrose(out) + H(+)(out) = sucrose(in) + H(+)(in). Its pathway is glycan biosynthesis; sucrose metabolism. Inhibited by protonophores (e.g. dinitrophenol and carbonyl cyanide m-chlorophenyl-hydrazone (CCCP)) and SH group inhibitors (e.g. p-chloromercuribenzene sulphonic acid (PCMBS)). Its function is as follows. Responsible for the transport of sucrose into the cell, with the concomitant uptake of protons (symport system). Can also transport maltose at a lesser rate. May also transport biotin. Probably involved in carpel maturation that leads to pod shatter and seed dispersal. The sequence is that of Sucrose transport protein SUC3 from Arabidopsis thaliana (Mouse-ear cress).